The following is a 472-amino-acid chain: Proline--tRNA ligase (472 aa).

It belongs to the class-II aminoacyl-tRNA synthetase family. ProS type 3 subfamily. Homodimer.

Its subcellular location is the cytoplasm. It catalyses the reaction tRNA(Pro) + L-proline + ATP = L-prolyl-tRNA(Pro) + AMP + diphosphate. In terms of biological role, catalyzes the attachment of proline to tRNA(Pro) in a two-step reaction: proline is first activated by ATP to form Pro-AMP and then transferred to the acceptor end of tRNA(Pro). The protein is Proline--tRNA ligase of Ureaplasma parvum serovar 3 (strain ATCC 27815 / 27 / NCTC 11736).